The chain runs to 24 residues: Humanin-like 6 (24 aa).

The protein belongs to the humanin family. In terms of tissue distribution, expressed in skeletal muscle and testis.

The protein resides in the secreted. It localises to the cytoplasm. In terms of biological role, plays a role as a neuroprotective and antiapoptotic factor. The protein is Humanin-like 6 of Homo sapiens (Human).